Reading from the N-terminus, the 141-residue chain is Photosystem I reaction center subunit IV A, chloroplastic (141 aa).

A chloroplast-targeting transit peptide spans 1-49 (MASCNMASAASNFLVATPNVASNTNTSRTTMLFFSSKNYGSTAPRLVVR). The segment covering 57–73 (PAAAATAEPAEAPVKAA) has biased composition (low complexity). The disordered stretch occupies residues 57–83 (PAAAATAEPAEAPVKAAKPPPIGPKRG).

This sequence belongs to the PsaE family. 2 isoforms exists (ratio 1:1). With or without the N-terminal alanine.

It localises to the plastid. The protein resides in the chloroplast thylakoid membrane. Its function is as follows. Stabilizes the interaction between PsaC and the PSI core, assists the docking of the ferredoxin to PSI and interacts with ferredoxin-NADP oxidoreductase. In Nicotiana sylvestris (Wood tobacco), this protein is Photosystem I reaction center subunit IV A, chloroplastic (PSAEA).